The primary structure comprises 293 residues: Aspartate carbamoyltransferase catalytic subunit (293 aa).

Residues arginine 50 and threonine 51 each contribute to the carbamoyl phosphate site. Lysine 78 contacts L-aspartate. Carbamoyl phosphate is bound by residues arginine 100, histidine 127, and glutamine 130. L-aspartate is bound by residues arginine 160 and arginine 210. Positions 253 and 254 each coordinate carbamoyl phosphate.

Belongs to the aspartate/ornithine carbamoyltransferase superfamily. ATCase family. As to quaternary structure, heterododecamer (2C3:3R2) of six catalytic PyrB chains organized as two trimers (C3), and six regulatory PyrI chains organized as three dimers (R2).

It carries out the reaction carbamoyl phosphate + L-aspartate = N-carbamoyl-L-aspartate + phosphate + H(+). It participates in pyrimidine metabolism; UMP biosynthesis via de novo pathway; (S)-dihydroorotate from bicarbonate: step 2/3. Catalyzes the condensation of carbamoyl phosphate and aspartate to form carbamoyl aspartate and inorganic phosphate, the committed step in the de novo pyrimidine nucleotide biosynthesis pathway. The sequence is that of Aspartate carbamoyltransferase catalytic subunit from Staphylococcus epidermidis (strain ATCC 35984 / DSM 28319 / BCRC 17069 / CCUG 31568 / BM 3577 / RP62A).